Consider the following 363-residue polypeptide: 3-isopropylmalate dehydrogenase (363 aa).

Residue Gly-78–Glu-91 participates in NAD(+) binding. The substrate site is built by Arg-99, Arg-109, Arg-138, and Asp-227. Residues Asp-227, Asp-251, and Asp-255 each coordinate Mg(2+). Gly-285 to Asn-297 lines the NAD(+) pocket.

The protein belongs to the isocitrate and isopropylmalate dehydrogenases family. LeuB type 1 subfamily. Homodimer. Requires Mg(2+) as cofactor. Mn(2+) serves as cofactor.

Its subcellular location is the cytoplasm. It carries out the reaction (2R,3S)-3-isopropylmalate + NAD(+) = 4-methyl-2-oxopentanoate + CO2 + NADH. It functions in the pathway amino-acid biosynthesis; L-leucine biosynthesis; L-leucine from 3-methyl-2-oxobutanoate: step 3/4. Catalyzes the oxidation of 3-carboxy-2-hydroxy-4-methylpentanoate (3-isopropylmalate) to 3-carboxy-4-methyl-2-oxopentanoate. The product decarboxylates to 4-methyl-2 oxopentanoate. The sequence is that of 3-isopropylmalate dehydrogenase from Buchnera aphidicola subsp. Uroleucon helianthicola.